A 121-amino-acid chain; its full sequence is Large ribosomal subunit protein uL18 (121 aa).

It belongs to the universal ribosomal protein uL18 family. As to quaternary structure, part of the 50S ribosomal subunit; part of the 5S rRNA/L5/L18/L25 subcomplex. Contacts the 5S and 23S rRNAs.

Its function is as follows. This is one of the proteins that bind and probably mediate the attachment of the 5S RNA into the large ribosomal subunit, where it forms part of the central protuberance. This Streptococcus equi subsp. zooepidemicus (strain MGCS10565) protein is Large ribosomal subunit protein uL18.